Consider the following 364-residue polypeptide: Dihydroorotase (364 aa).

H14, H16, K98, H137, H180, and D258 together coordinate Zn(2+). Residue K98 is modified to N6-carboxylysine.

It belongs to the metallo-dependent hydrolases superfamily. DHOase family. Class II DHOase subfamily. It depends on Zn(2+) as a cofactor.

It catalyses the reaction (S)-dihydroorotate + H2O = N-carbamoyl-L-aspartate + H(+). It functions in the pathway pyrimidine metabolism; UMP biosynthesis via de novo pathway; (S)-dihydroorotate from bicarbonate: step 3/3. Catalyzes the conversion of ureidosuccinic acid (USA) to dihydroorotate, the third step of the de novo pyrimidine biosynthetic pathway. This Saccharomyces cerevisiae (strain ATCC 204508 / S288c) (Baker's yeast) protein is Dihydroorotase (URA4).